A 75-amino-acid polypeptide reads, in one-letter code: Small ribosomal subunit protein bS18 (75 aa).

Belongs to the bacterial ribosomal protein bS18 family. In terms of assembly, part of the 30S ribosomal subunit. Forms a tight heterodimer with protein bS6.

In terms of biological role, binds as a heterodimer with protein bS6 to the central domain of the 16S rRNA, where it helps stabilize the platform of the 30S subunit. The sequence is that of Small ribosomal subunit protein bS18 from Pasteurella multocida (strain Pm70).